We begin with the raw amino-acid sequence, 378 residues long: MSAPDKQQPPHGGGTGGGGGAGGQAMDPAAAGPTKAKKTNAGVRRPEKPPYSYIALIVMAIQSSPSKRLTLSEIYQFLQARFPFFRGAYQGWKNSVRHNLSLNECFIKLPKGLGRPGKGHYWTIDPASEFMFEEGSFRRRPRGFRRKCQALKPVYSMVNGLGFNHLPDTYGFQGSGGLSCAPNSLALEGGLGMMNGHLAGNVDGMALPSHSVPHLPSNGGHSYMGGCGGSAAGEYPHHDSSVPASPLLPAGAGGVMEPHAVYSSSAAAWPPAASAALNSGASYIKQQPLSPCNPAANPLSGSISTHSLEQPYLHQNSHNGPAELQGIPRYHSQSPSMCDRKEFVFSFNAMASSSMHTTGGGSYYHQQVTYQDIKPCVM.

The tract at residues 1-45 (MSAPDKQQPPHGGGTGGGGGAGGQAMDPAAAGPTKAKKTNAGVRR) is disordered. The segment covering 11 to 23 (HGGGTGGGGGAGG) has biased composition (gly residues). The span at 24 to 42 (QAMDPAAAGPTKAKKTNAG) shows a compositional bias: low complexity. The segment at residues 47–138 (EKPPYSYIAL…EFMFEEGSFR (92 aa)) is a DNA-binding region (fork-head).

Expressed primarily in lung in alveolar type II pneumocyte cells, and to a lesser extent in placenta, stomach, intestine and colon.

The protein resides in the nucleus. Its function is as follows. Probable transcription activator for a number of lung-specific genes. The polypeptide is Forkhead box protein F1 (Foxf1) (Mus musculus (Mouse)).